A 548-amino-acid polypeptide reads, in one-letter code: Glucose-6-phosphate isomerase 1 (548 aa).

The active-site Proton donor is the glutamate 353. Active-site residues include histidine 384 and lysine 512.

This sequence belongs to the GPI family.

It localises to the cytoplasm. The enzyme catalyses alpha-D-glucose 6-phosphate = beta-D-fructose 6-phosphate. Its pathway is carbohydrate biosynthesis; gluconeogenesis. It functions in the pathway carbohydrate degradation; glycolysis; D-glyceraldehyde 3-phosphate and glycerone phosphate from D-glucose: step 2/4. Its function is as follows. Catalyzes the reversible isomerization of glucose-6-phosphate to fructose-6-phosphate. This is Glucose-6-phosphate isomerase 1 from Neisseria gonorrhoeae (strain ATCC 700825 / FA 1090).